Reading from the N-terminus, the 369-residue chain is NAD(P)H-quinone oxidoreductase subunit 1, chloroplastic (369 aa).

5 consecutive transmembrane segments (helical) span residues 25-45 (FGFI…TIGI), 104-124 (VMVV…HGII), 130-150 (IGVF…LTAG), 270-290 (LSAT…LFLP), and 306-326 (VISI…FLFI).

The protein belongs to the complex I subunit 1 family. NDH is composed of at least 16 different subunits, 5 of which are encoded in the nucleus.

The protein resides in the plastid. It is found in the chloroplast thylakoid membrane. It catalyses the reaction a plastoquinone + NADH + (n+1) H(+)(in) = a plastoquinol + NAD(+) + n H(+)(out). It carries out the reaction a plastoquinone + NADPH + (n+1) H(+)(in) = a plastoquinol + NADP(+) + n H(+)(out). Functionally, NDH shuttles electrons from NAD(P)H:plastoquinone, via FMN and iron-sulfur (Fe-S) centers, to quinones in the photosynthetic chain and possibly in a chloroplast respiratory chain. The immediate electron acceptor for the enzyme in this species is believed to be plastoquinone. Couples the redox reaction to proton translocation, and thus conserves the redox energy in a proton gradient. This is NAD(P)H-quinone oxidoreductase subunit 1, chloroplastic from Huperzia lucidula (Shining clubmoss).